A 134-amino-acid chain; its full sequence is Large-conductance mechanosensitive channel (134 aa).

The next 2 helical transmembrane spans lie at Val16–Leu36 and Gly81–Val101.

Belongs to the MscL family. As to quaternary structure, homopentamer.

The protein resides in the cell inner membrane. Functionally, channel that opens in response to stretch forces in the membrane lipid bilayer. May participate in the regulation of osmotic pressure changes within the cell. The chain is Large-conductance mechanosensitive channel from Xylella fastidiosa (strain M12).